The primary structure comprises 239 residues: Ribosomal RNA small subunit methyltransferase G (239 aa).

S-adenosyl-L-methionine contacts are provided by residues glycine 80, phenylalanine 85, 103 to 105 (EAS), 131 to 132 (AE), and arginine 150.

The protein belongs to the methyltransferase superfamily. RNA methyltransferase RsmG family.

The protein resides in the cytoplasm. Its function is as follows. Specifically methylates the N7 position of a guanine in 16S rRNA. The sequence is that of Ribosomal RNA small subunit methyltransferase G from Caldanaerobacter subterraneus subsp. tengcongensis (strain DSM 15242 / JCM 11007 / NBRC 100824 / MB4) (Thermoanaerobacter tengcongensis).